The following is a 468-amino-acid chain: Intramembrane protease 2 (468 aa).

The Lumenal portion of the chain corresponds to 1–22 (MAEAATEIPPTASNVTVFTFEE). An N-linked (GlcNAc...) asparagine glycan is attached at N14. The chain crosses the membrane as a helical span at residues 23–43 (QATSSLALYGMSILCIIIGSI). Residues 44–70 (RSAQYIRTNIDKKRLIEGSITMREARK) lie on the Cytoplasmic side of the membrane. The helical transmembrane segment at 71-91 (FPISASLVLFGLYLFFKPAAE) threads the bilayer. The Lumenal segment spans residues 92 to 168 (RFLWVARVFQ…TNLPTIQKAE (77 aa)). Residues N114 and N123 are each glycosylated (N-linked (GlcNAc...) asparagine). Residues 169-189 (CMQLLTFLICFEGVNAFASLL) traverse the membrane as a helical segment. At 190 to 247 (KPFVTAFLKKMPLVPSFLRFNAPYLFSLKKGNKEMEEGDIEDAKKKETEYLFKIDFDR) the chain is on the cytoplasmic side. Residues 248-265 (YDIIALLMCSPILISHLL) traverse the membrane as a helical segment. Topologically, residues 266 to 267 (KR) are lumenal. Residues 268-284 (HWITNNIIGVSFSILGI) traverse the membrane as a helical segment. Topologically, residues 285–296 (ERLHLASFKAGS) are cytoplasmic. The chain crosses the membrane as a helical span at residues 297-317 (LLLVGLFFYDIFWVFGTDVMT). Residue D306 is part of the active site. The Lumenal segment spans residues 318–343 (SVAKGIDAPILLQFPQDIYRNGIMEA). A helical transmembrane segment spans residues 344–364 (SKHSMLGLGDIVIPGIFIALL). D353 is an active-site residue. Topologically, residues 365-388 (RRFDYRVVQTTAESKAPQGSLKGR) are cytoplasmic. Residues 389 to 409 (YYFVVTVVAYMAGLFITMAVM) form a helical membrane-spanning segment. The Lumenal segment spans residues 410 to 415 (HHFKAA). Residues 416-436 (QPALLYLVPCCLFVPLLLAVI) traverse the membrane as a helical segment. Positions 417-419 (PAL) match the PAL motif. Over 437–468 (RGELSALWNYDESRHVDNEENRKKVDSGKKNN) the chain is Cytoplasmic.

This sequence belongs to the peptidase A22B family.

It localises to the membrane. It is found in the endoplasmic reticulum membrane. Acts as intramembrane protease. In larvae, required for the complete shedding of the cuticle during molting, possibly by regulating cholesterol uptake via lrp-1. Involved in embryonic and larval development. The polypeptide is Intramembrane protease 2 (Caenorhabditis elegans).